The sequence spans 346 residues: Phosphoribosylformylglycinamidine cyclo-ligase (346 aa).

Belongs to the AIR synthase family.

It is found in the cytoplasm. The catalysed reaction is 2-formamido-N(1)-(5-O-phospho-beta-D-ribosyl)acetamidine + ATP = 5-amino-1-(5-phospho-beta-D-ribosyl)imidazole + ADP + phosphate + H(+). It functions in the pathway purine metabolism; IMP biosynthesis via de novo pathway; 5-amino-1-(5-phospho-D-ribosyl)imidazole from N(2)-formyl-N(1)-(5-phospho-D-ribosyl)glycinamide: step 2/2. This Photorhabdus laumondii subsp. laumondii (strain DSM 15139 / CIP 105565 / TT01) (Photorhabdus luminescens subsp. laumondii) protein is Phosphoribosylformylglycinamidine cyclo-ligase.